Consider the following 312-residue polypeptide: Telomere-binding protein OPG077 (312 aa).

The protein belongs to the orthopoxvirus OPG077 family.

It localises to the virion. Its function is as follows. DNA-binding protein which binds to the hairpin form of the viral telomeric sequence. Required for the production of mature virions (MV). The sequence is that of Telomere-binding protein OPG077 (OPG077) from Rabbitpox virus (strain Utrecht) (RPV).